Here is a 125-residue protein sequence, read N- to C-terminus: Hydrogenase maturation factor HypA (125 aa).

Ni(2+) is bound at residue histidine 2. Residues cysteine 73, cysteine 76, cysteine 96, and cysteine 99 each contribute to the Zn(2+) site.

It belongs to the HypA/HybF family.

Functionally, involved in the maturation of [NiFe] hydrogenases. Required for nickel insertion into the metal center of the hydrogenase. The protein is Hydrogenase maturation factor HypA of Methanobrevibacter smithii (strain ATCC 35061 / DSM 861 / OCM 144 / PS).